Consider the following 431-residue polypeptide: MLTIKNWQLLSENDKKLCLSRPRQSSAIKENVLEIINQVQLSGDKALYDLTKQFDRVNLQYLQVPQEKIEQANIPKNALNAITQAIGTISSYHQSLLPENTEISTASGITIRNVYRPIQKVGLYVPGGNKTPLVSSLLMQAIPAKVAGCPIKVLCTPPDAEGEINEHILVAARLCGIDTIYAIGGAQAIAAMAYGTESVIKVDKIFGPGNSYVTQAKTLVAIDADGAAIDMPAGPSEVMILADTEANPEFIAADLLAQAEHGPDSQVILICDECELANQVNQQLEIQMSYLSRIEFIKRSLANSRIIICSNQSEQLDIINSYAPEHLIINRKNPEPWVEKIVAAGTVFLGSWAAETMGDYVTGSNHVLPTSGFARNHSGLSTLDFMTRFTVQAINQEAIRNLGPAAMTLAELEGLDAHANAVQIRLNTLGD.

NAD(+) contacts are provided by tyrosine 124, glutamine 187, and asparagine 210. Serine 236, glutamine 258, and histidine 261 together coordinate substrate. Residues glutamine 258 and histidine 261 each coordinate Zn(2+). Residues glutamate 325 and histidine 326 each act as proton acceptor in the active site. Substrate-binding residues include histidine 326, aspartate 359, glutamate 413, and histidine 418. Zn(2+) is bound at residue aspartate 359. A Zn(2+)-binding site is contributed by histidine 418.

It belongs to the histidinol dehydrogenase family. The cofactor is Zn(2+).

The catalysed reaction is L-histidinol + 2 NAD(+) + H2O = L-histidine + 2 NADH + 3 H(+). It functions in the pathway amino-acid biosynthesis; L-histidine biosynthesis; L-histidine from 5-phospho-alpha-D-ribose 1-diphosphate: step 9/9. Functionally, catalyzes the sequential NAD-dependent oxidations of L-histidinol to L-histidinaldehyde and then to L-histidine. The chain is Histidinol dehydrogenase from Legionella pneumophila subsp. pneumophila (strain Philadelphia 1 / ATCC 33152 / DSM 7513).